Consider the following 332-residue polypeptide: 2,3-diketo-L-gulonate reductase (332 aa).

Catalysis depends on His44, which acts as the Proton donor. NAD(+) is bound by residues 168 to 174, 224 to 225, and 304 to 306; these read ITMVDMS, WK, and GHE.

Belongs to the LDH2/MDH2 oxidoreductase family. DlgD subfamily. In terms of assembly, homodimer.

It is found in the cytoplasm. The catalysed reaction is 3-dehydro-L-gulonate + NAD(+) = 2,3-dioxo-L-gulonate + NADH + H(+). The enzyme catalyses 3-dehydro-L-gulonate + NADP(+) = 2,3-dioxo-L-gulonate + NADPH + H(+). Catalyzes the reduction of 2,3-diketo-L-gulonate in the presence of NADH, to form 3-keto-L-gulonate. In Escherichia coli (strain SMS-3-5 / SECEC), this protein is 2,3-diketo-L-gulonate reductase.